The primary structure comprises 398 residues: tRNA pseudouridine synthase D (398 aa).

Aspartate 76 acts as the Nucleophile in catalysis. One can recognise a TRUD domain in the interval 151 to 361 (GVPNRFGVQR…MEGERRPLRV (211 aa)).

The protein belongs to the pseudouridine synthase TruD family.

It carries out the reaction uridine(13) in tRNA = pseudouridine(13) in tRNA. Functionally, responsible for synthesis of pseudouridine from uracil-13 in transfer RNAs. In Geobacter sp. (strain M21), this protein is tRNA pseudouridine synthase D.